The chain runs to 199 residues: Peroxiredoxin-1 (199 aa).

N-acetylserine is present on serine 2. The region spanning 6–165 (AKIGYPAPNF…ILRLVQAFQF (160 aa)) is the Thioredoxin domain. Lysine 7 carries the N6-acetyllysine; alternate modification. Residue lysine 7 forms a Glycyl lysine isopeptide (Lys-Gly) (interchain with G-Cter in SUMO2); alternate linkage. An N6-acetyllysine modification is found at lysine 16. Phosphoserine is present on serine 32. Cysteine 52 functions as the Cysteine sulfenic acid (-SOH) intermediate in the catalytic mechanism. Threonine 90 carries the phosphothreonine modification. Lysine 120 participates in a covalent cross-link: Glycyl lysine isopeptide (Lys-Gly) (interchain with G-Cter in SUMO2). Residue lysine 136 is modified to N6-acetyllysine. The tract at residues 176–199 (GWKPGSDTIKPDVQKSKEYFSKQK) is disordered. A compositionally biased stretch (basic and acidic residues) spans 184–199 (IKPDVQKSKEYFSKQK). Residue lysine 185 forms a Glycyl lysine isopeptide (Lys-Gly) (interchain with G-Cter in SUMO1) linkage. N6-acetyllysine is present on lysine 197.

The protein belongs to the peroxiredoxin family. AhpC/Prx1 subfamily. As to quaternary structure, homodimer; disulfide-linked, upon oxidation. 5 homodimers assemble to form a ring-like decamer. Interacts with GDPD5; forms a mixed-disulfide with GDPD5. Interacts with SESN1 and SESN2. Interacts with FAM107A. Post-translationally, phosphorylated on Thr-90 during the M-phase, which leads to a decrease in enzymatic activity. Acetylation increases reducing activity and resistance to superoxidation. Deacetylated by HDAC6 which decreases reducing activity.

The protein localises to the cytoplasm. The enzyme catalyses a hydroperoxide + [thioredoxin]-dithiol = an alcohol + [thioredoxin]-disulfide + H2O. Its function is as follows. Thiol-specific peroxidase that catalyzes the reduction of hydrogen peroxide and organic hydroperoxides to water and alcohols, respectively. Plays a role in cell protection against oxidative stress by detoxifying peroxides and as sensor of hydrogen peroxide-mediated signaling events. Might participate in the signaling cascades of growth factors and tumor necrosis factor-alpha by regulating the intracellular concentrations of H(2)O(2). Reduces an intramolecular disulfide bond in GDPD5 that gates the ability to GDPD5 to drive postmitotic motor neuron differentiation. The chain is Peroxiredoxin-1 (PRDX1) from Cricetulus griseus (Chinese hamster).